The sequence spans 420 residues: Meiotically up-regulated gene 137 protein (420 aa).

The 223-residue stretch at 10–232 folds into the BAR domain; sequence NEKPLGDQRA…QNSLTPQKKI (223 aa). Positions 279–345 constitute an SH3 domain; that stretch reads KETVFVKAIY…PVNYCTRIYD (67 aa). The disordered stretch occupies residues 398–420; it reads SQNVEASSQPIKIRKPLPEIPNK.

It is found in the cytoplasm. The protein localises to the nucleus. Its function is as follows. Has a role in meiosis and sporulation. This Schizosaccharomyces pombe (strain 972 / ATCC 24843) (Fission yeast) protein is Meiotically up-regulated gene 137 protein (mug137).